A 378-amino-acid chain; its full sequence is Peptide methionine sulfoxide reductase MsrA/MsrB (378 aa).

Positions Gln40 to Ala197 are peptide methionine sulfoxide reductase A. Cys48 is an active-site residue. Positions Asp240–Lys362 constitute a MsrB domain. Cys351 serves as the catalytic Nucleophile.

This sequence in the N-terminal section; belongs to the MsrA Met sulfoxide reductase family. The protein in the C-terminal section; belongs to the MsrB Met sulfoxide reductase family.

It carries out the reaction L-methionyl-[protein] + [thioredoxin]-disulfide + H2O = L-methionyl-(S)-S-oxide-[protein] + [thioredoxin]-dithiol. It catalyses the reaction [thioredoxin]-disulfide + L-methionine + H2O = L-methionine (S)-S-oxide + [thioredoxin]-dithiol. The enzyme catalyses L-methionyl-[protein] + [thioredoxin]-disulfide + H2O = L-methionyl-(R)-S-oxide-[protein] + [thioredoxin]-dithiol. Its function is as follows. Has an important function as a repair enzyme for proteins that have been inactivated by oxidation. Catalyzes the reversible oxidation-reduction of methionine sulfoxide in proteins to methionine. The chain is Peptide methionine sulfoxide reductase MsrA/MsrB (msrAB) from Vibrio cholerae serotype O1 (strain ATCC 39315 / El Tor Inaba N16961).